The chain runs to 581 residues: Arginine--tRNA ligase (581 aa).

A 'HIGH' region motif is present at residues 126–136; the sequence is PNLAKEMHVGH.

Belongs to the class-I aminoacyl-tRNA synthetase family. Monomer.

The protein resides in the cytoplasm. The enzyme catalyses tRNA(Arg) + L-arginine + ATP = L-arginyl-tRNA(Arg) + AMP + diphosphate. The chain is Arginine--tRNA ligase from Shewanella frigidimarina (strain NCIMB 400).